The following is a 473-amino-acid chain: 1-aminocyclopropane-1-carboxylate synthase (473 aa).

Substrate-binding positions include 84–85, Tyr145, and Asp151; that span reads DY. Lys273 carries the post-translational modification N6-(pyridoxal phosphate)lysine.

Belongs to the class-I pyridoxal-phosphate-dependent aminotransferase family. As to quaternary structure, homodimer. Requires pyridoxal 5'-phosphate as cofactor.

It carries out the reaction S-adenosyl-L-methionine = 1-aminocyclopropane-1-carboxylate + S-methyl-5'-thioadenosine + H(+). The enzyme catalyses (2S)-2-amino-3-butenoate + H2O = 2-oxobutanoate + NH4(+). It functions in the pathway alkene biosynthesis; ethylene biosynthesis via S-adenosyl-L-methionine; ethylene from S-adenosyl-L-methionine: step 1/2. Its activity is regulated as follows. Inhibited by L-aminoethoxyvinylglycine (AVG). Inhibited by L-vinylglycine (L-VG). Inhibited by S-methylmethionine through a L-VG ketimine intermediate. In terms of biological role, catalyzes the formation of 1-aminocyclopropane-1-carboxylate, a direct precursor of ethylene in higher plants. Also catalyzes the conversion of L-vinylglycine (L-VG) to alpha-ketobutyrate and ammonia. Can use S-methylmethionine as substrate. This chain is 1-aminocyclopropane-1-carboxylate synthase, found in Malus domestica (Apple).